Consider the following 305-residue polypeptide: MSTQYSILFKQEHAHEDAIWSVGWGKNSNDGSELVISGSLDDLVKVWKWSDERLEMQWALEGHQLGVVSVDVSPSGNIMASSSLDAHIRLWDLESGKQIRSIDAGPVDAWSVAFSPDSQHLATGSHVGKVNIFGVETGKKEYSLDTRGKFILSIAYSPDGKYLASGAIDGIINIFDIATGKLLHTLEGHAMPIRSLTFSTDSQLLVTASDDGYIKIYDVQHASLAATLSGHGSWVLNVAFSPDDAHFVSSSSDKSVKVWDVSARTCVHTFLDHQDQVWGVKYNRNGSKIVSVGDDQEIHVYDCPI.

7 WD repeats span residues 14-57 (AHED…LEMQ), 62-101 (GHQL…QIRS), 104-143 (AGPV…KEYS), 146-187 (TRGK…HTLE), 188-227 (GHAM…LAAT), 230-269 (GHGS…CVHT), and 272-305 (DHQD…DCPI).

It belongs to the SKI8 family. Component of the PAF1 complex. Component of the SKI complex.

It localises to the nucleus. It is found in the cytoplasm. Component of the PAF1 complex (PAF1C) which has multiple functions during transcription by RNA polymerase II and is implicated in regulation of development and maintenance of embryonic stem cell pluripotency. PAF1C associates with RNA polymerase II through interaction with POLR2A CTD non-phosphorylated and 'Ser-2'- and 'Ser-5'-phosphorylated forms and is involved in transcriptional elongation, acting both independently and synergistically with TCEA1 and in cooperation with the DSIF complex and HTATSF1. Also acts as a component of the SKI complex, a multiprotein complex that assists the RNA-degrading exosome during the mRNA decay and quality-control pathways. The SKI complex catalyzes mRNA extraction from 80S ribosomal complexes in the 3'-5' direction and channels mRNA to the cytosolic exosome for degradation. The sequence is that of Superkiller complex protein 8 (skic8) from Xenopus laevis (African clawed frog).